A 405-amino-acid chain; its full sequence is Phosphopentomutase (405 aa).

The Mn(2+) site is built by Asp-10, Asp-303, His-308, Asp-344, His-345, and His-356.

The protein belongs to the phosphopentomutase family. Requires Mn(2+) as cofactor.

The protein resides in the cytoplasm. It carries out the reaction 2-deoxy-alpha-D-ribose 1-phosphate = 2-deoxy-D-ribose 5-phosphate. The enzyme catalyses alpha-D-ribose 1-phosphate = D-ribose 5-phosphate. It functions in the pathway carbohydrate degradation; 2-deoxy-D-ribose 1-phosphate degradation; D-glyceraldehyde 3-phosphate and acetaldehyde from 2-deoxy-alpha-D-ribose 1-phosphate: step 1/2. Its function is as follows. Isomerase that catalyzes the conversion of deoxy-ribose 1-phosphate (dRib-1-P) and ribose 1-phosphate (Rib-1-P) to deoxy-ribose 5-phosphate (dRib-5-P) and ribose 5-phosphate (Rib-5-P), respectively. The chain is Phosphopentomutase from Shewanella frigidimarina (strain NCIMB 400).